Reading from the N-terminus, the 235-residue chain is Carboxy-S-adenosyl-L-methionine synthase (235 aa).

S-adenosyl-L-methionine contacts are provided by residues tyrosine 35, 60 to 62 (GCS), 83 to 84 (DN), asparagine 124, and arginine 191.

The protein belongs to the class I-like SAM-binding methyltransferase superfamily. Cx-SAM synthase family. As to quaternary structure, homodimer.

The catalysed reaction is prephenate + S-adenosyl-L-methionine = carboxy-S-adenosyl-L-methionine + 3-phenylpyruvate + H2O. Catalyzes the conversion of S-adenosyl-L-methionine (SAM) to carboxy-S-adenosyl-L-methionine (Cx-SAM). The protein is Carboxy-S-adenosyl-L-methionine synthase of Campylobacter jejuni subsp. doylei (strain ATCC BAA-1458 / RM4099 / 269.97).